A 369-amino-acid chain; its full sequence is 3-dehydroquinate synthase (369 aa).

Residues 110–114 (GVIGD), 134–135 (TT), Lys-147, Lys-156, and 174–177 (TLKT) contribute to the NAD(+) site. Glu-189, His-254, and His-271 together coordinate Zn(2+).

This sequence belongs to the sugar phosphate cyclases superfamily. Dehydroquinate synthase family. Co(2+) is required as a cofactor. It depends on Zn(2+) as a cofactor. Requires NAD(+) as cofactor.

It localises to the cytoplasm. It catalyses the reaction 7-phospho-2-dehydro-3-deoxy-D-arabino-heptonate = 3-dehydroquinate + phosphate. The protein operates within metabolic intermediate biosynthesis; chorismate biosynthesis; chorismate from D-erythrose 4-phosphate and phosphoenolpyruvate: step 2/7. Its function is as follows. Catalyzes the conversion of 3-deoxy-D-arabino-heptulosonate 7-phosphate (DAHP) to dehydroquinate (DHQ). This is 3-dehydroquinate synthase from Cyanothece sp. (strain PCC 7425 / ATCC 29141).